The following is a 567-amino-acid chain: MSAWRIRVLATLCFLWQPRVHGQLPPPQNVTLLSKDFDMILTWTPGEGSPPDVLYTVRYESKTRMDKWIKVPHCRNIHSVSCNLTCVIPNFFIKFRAQVKATSGRFHSPWVKSQFKEYHLDVELAPPLLNVNVKENVIHVNATFPMAICVESLPWMYDFNLWEAGSEDKKQYKSIFRKKAVTIDTTALRGNYCFNARSSIQSIDFKHSKFSQPVCMQLNYEGEWKFPFSATIPVFVLLILLTSASIIWLLKQDAKHKKMPQTLDLSNCKIAGPTFCCELRENEFLTDCLICTDKPMSQGKKNKTLAQNNQMWMASFLPSSSSEEEEEEEEEDSSSFIPYTEMLQFPRKHFNFQTPRTADAETILDSTSGVLSVVGGSTLDLSALGFSFFPIRKNEMDTSGSQGNEKASHSHSSSLGRISLTDVRFPGPREHGQHGTDSNDCLEVSLLHTLMNSSCTRLPADEHCLYKKDHDFTICYQKPTLDQPVQVSENPLLNEDPSMEKFIYLQTLQVAEDEGFASDCDSGNFTEGTPPASTVLSDELRISDMEKRYDKKFKFKGYQHSHYMRRS.

Residues 1-22 (MSAWRIRVLATLCFLWQPRVHG) form the signal peptide. The Extracellular segment spans residues 23 to 229 (QLPPPQNVTL…YEGEWKFPFS (207 aa)). The Fibronectin type-III domain occupies 26–121 (PPQNVTLLSK…KSQFKEYHLD (96 aa)). N-linked (GlcNAc...) asparagine glycosylation is present at Asn-29. Disulfide bonds link Cys-74–Cys-82, Cys-86–Cys-149, and Cys-193–Cys-215. Residue Asn-141 is glycosylated (N-linked (GlcNAc...) asparagine). A helical membrane pass occupies residues 230-250 (ATIPVFVLLILLTSASIIWLL). The Cytoplasmic segment spans residues 251 to 567 (KQDAKHKKMP…YQHSHYMRRS (317 aa)).

Belongs to the type II cytokine receptor family. Heterodimer with IL10RB.

It is found in the membrane. Functionally, the IFNLR1/IL10RB dimer is a receptor for the cytokine ligands IFNL2 and IFNL3 and mediates their antiviral activity. The ligand/receptor complex stimulate the activation of the JAK/STAT signaling pathway leading to the expression of IFN-stimulated genes (ISG), which contribute to the antiviral state. Determines the cell type specificity of the lambda interferon action. Shows a more restricted pattern of expression in the epithelial tissues thereby limiting responses to lambda interferons primarily to epithelial cells of the respiratory, gastrointestinal, and reproductive tracts. The protein is Interferon lambda receptor 1 (IFNLR1) of Gallus gallus (Chicken).